A 419-amino-acid polypeptide reads, in one-letter code: UDP-N-acetylglucosamine 1-carboxyvinyltransferase (419 aa).

22-23 provides a ligand contact to phosphoenolpyruvate; the sequence is KN. Residue arginine 93 coordinates UDP-N-acetyl-alpha-D-glucosamine. The active-site Proton donor is cysteine 117. Cysteine 117 bears the 2-(S-cysteinyl)pyruvic acid O-phosphothioketal mark. The UDP-N-acetyl-alpha-D-glucosamine site is built by aspartate 307 and isoleucine 329.

It belongs to the EPSP synthase family. MurA subfamily.

Its subcellular location is the cytoplasm. It catalyses the reaction phosphoenolpyruvate + UDP-N-acetyl-alpha-D-glucosamine = UDP-N-acetyl-3-O-(1-carboxyvinyl)-alpha-D-glucosamine + phosphate. It functions in the pathway cell wall biogenesis; peptidoglycan biosynthesis. Its function is as follows. Cell wall formation. Adds enolpyruvyl to UDP-N-acetylglucosamine. The polypeptide is UDP-N-acetylglucosamine 1-carboxyvinyltransferase (Shewanella putrefaciens (strain CN-32 / ATCC BAA-453)).